The sequence spans 89 residues: Large ribosomal subunit protein bL27 (89 aa).

The tract at residues 1–21 is disordered; that stretch reads MAHKKAGGSSRNGRDSESKRL.

The protein belongs to the bacterial ribosomal protein bL27 family.

The sequence is that of Large ribosomal subunit protein bL27 from Chelativorans sp. (strain BNC1).